Reading from the N-terminus, the 415-residue chain is MKGSYKSRWVIVIVVVIAAIAAFWFWQGRNDSQSAAPGATKQAQQSPAGGRRGMRAGPLAPVQAATAVEQAVPRYLTGLGTITAANTVTVRSRVDGQLMALHFQEGQQVKAGDLLAEIDPSQFKVALAQAQGQLAKDKATLANARRDLARYQQLAKTNLVSRQELDAQQALVSETEGTIKADEASVASAQLQLDWSRITAPVDGRVGLKQVDVGNQISSGDTTGIVVITQTHPIDLVFTLPESDIATVVQAQKAGKPLVVEAWDRTNSKKLSEGTLLSLDNQIDATTGTIKVKARFNNQDDALFPNQFVNARMLVDTEQNAVVIPTAALQMGNEGHFVWVLNSENKVSKHLVTPGIQDSQKVVIRAGISAGDRVVTDGIDRLTEGAKVEVVEAQSATTPEEKATSREYAKKGARS.

The N-terminal stretch at 1 to 21 (MKGSYKSRWVIVIVVVIAAIA) is a signal peptide. The segment covering 31–46 (DSQSAAPGATKQAQQS) has biased composition (polar residues). 2 disordered regions span residues 31-56 (DSQS…GMRA) and 392-415 (EAQS…GARS). Basic and acidic residues predominate over residues 399–415 (PEEKATSREYAKKGARS).

The protein belongs to the membrane fusion protein (MFP) (TC 8.A.1) family. In terms of assembly, part of a tripartite efflux system composed of MdtA, MdtB and MdtC.

The protein resides in the cell inner membrane. Its function is as follows. The MdtABC tripartite complex confers resistance against novobiocin and deoxycholate. The chain is Multidrug resistance protein MdtA from Escherichia coli O6:K15:H31 (strain 536 / UPEC).